The following is a 504-amino-acid chain: Pre-mRNA-processing factor 19 (504 aa).

S2 carries the post-translational modification N-acetylserine. Positions 2–73 (SLICSISNEV…KPPSATSIPA (72 aa)) constitute a U-box domain. Residues 68 to 223 (ATSIPAILKA…VGLHSASIPG (156 aa)) form a may mediate interaction with PSMC5 region. N6-acetyllysine is present on residues K122, K179, K244, and K261. Residues 219–259 (ASIPGILALDLCPSDTNKILTGGADKNVVVFDKSSEQILAT) form a WD 1 repeat. 6 WD repeats span residues 262–301 (GHTK…CVQV), 304–345 (AHES…TKVT), 348–387 (TSGC…NVAN), 390–429 (GHSG…NFKT), 433–472 (DNNF…LHFT), and 473–503 (EHSG…KFYS).

The protein belongs to the WD repeat PRP19 family. Homotetramer. Component of activated, catalytic and post-catalytic spliceosomes. Component of the Prp19 complex/PRP19C/Nineteen complex/NTC and related complexes described as PRP19-CDC5L splicing complex and PSO4 complex. A homotetramer of PRPF19, CDC5L, PLRG1 and BCAS2 constitute the core of those complexes. The interaction with CDC5L, PLRG1 and BCAS2 is direct within this core complex. At least three less stably associated proteins CTNNBL1, CWC15 and HSPA8 are found in the Prp19 complex. The Prp19 complex associates with the spliceosome during its assembly and remodeling recruiting additional proteins. Component of the XAB2 complex, a multimeric protein complex composed of XAB2, PRPF19, AQR, ZNF830, ISY1, and PPIE. Interacts with CWC22 and EIF4A3 in an RNA-independent manner. Interacts with RPA1 and RPA2; the PRP19-CDC5L complex is recruited to the sites of DNA repair where it interacts with the replication protein A complex (RPA). Interacts with SETMAR; required for SETMAR recruitment to site of DNA damage. Interacts with U2AF2; the interaction is direct and recruits the Prp19 complex to RNA polymerase II C-terminal domain (CTD) and the pre-mRNA. Interacts with PRPF3. Interacts with APEX1, DNTT and PSMB4. Interacts with PSMC5. Interacts with KNSTRN. Interacts (via N-terminus) with CDC5L. Interacts with KHDC4. Interacts with USB1. Interacts with DDX41. Ubiquitous. Weakly expressed in senescent cells of different tissue origins. Highly expressed in tumor cell lines.

Its subcellular location is the nucleus. The protein localises to the nucleoplasm. It localises to the cytoplasm. It is found in the cytoskeleton. The protein resides in the spindle. Its subcellular location is the lipid droplet. It catalyses the reaction S-ubiquitinyl-[E2 ubiquitin-conjugating enzyme]-L-cysteine + [acceptor protein]-L-lysine = [E2 ubiquitin-conjugating enzyme]-L-cysteine + N(6)-ubiquitinyl-[acceptor protein]-L-lysine.. It functions in the pathway protein modification; protein ubiquitination. Functionally, ubiquitin-protein ligase which is a core component of several complexes mainly involved pre-mRNA splicing and DNA repair. Required for pre-mRNA splicing as component of the spliceosome. Core component of the PRP19C/Prp19 complex/NTC/Nineteen complex which is part of the spliceosome and participates in its assembly, its remodeling and is required for its activity. During assembly of the spliceosome, mediates 'Lys-63'-linked polyubiquitination of the U4 spliceosomal protein PRPF3. Ubiquitination of PRPF3 allows its recognition by the U5 component PRPF8 and stabilizes the U4/U5/U6 tri-snRNP spliceosomal complex. Recruited to RNA polymerase II C-terminal domain (CTD) and the pre-mRNA, it may also couple the transcriptional and spliceosomal machineries. The XAB2 complex, which contains PRPF19, is also involved in pre-mRNA splicing, transcription and transcription-coupled repair. Beside its role in pre-mRNA splicing PRPF19, as part of the PRP19-CDC5L complex, plays a role in the DNA damage response/DDR. It is recruited to the sites of DNA damage by the RPA complex where PRPF19 directly ubiquitinates RPA1 and RPA2. 'Lys-63'-linked polyubiquitination of the RPA complex allows the recruitment of the ATR-ATRIP complex and the activation of ATR, a master regulator of the DNA damage response. May also play a role in DNA double-strand break (DSB) repair by recruiting the repair factor SETMAR to altered DNA. As part of the PSO4 complex may also be involved in the DNA interstrand cross-links/ICLs repair process. In addition, may also mediate 'Lys-48'-linked polyubiquitination of substrates and play a role in proteasomal degradation. May play a role in the biogenesis of lipid droplets. May play a role in neural differentiation possibly through its function as part of the spliceosome. The chain is Pre-mRNA-processing factor 19 from Homo sapiens (Human).